Here is a 130-residue protein sequence, read N- to C-terminus: MADNQYYGTGRRKSATARVFAKVGSGDIVINKRSLQDYFSRPTARMVVMQALELVDMTGKLDLYITVAGGGITGQAGAIRHGITRALMQYDESLRPTLRKAGFVTRDARRVERKKVGLHKARKRPQYSKR.

It belongs to the universal ribosomal protein uS9 family.

The polypeptide is Small ribosomal subunit protein uS9 (Tolumonas auensis (strain DSM 9187 / NBRC 110442 / TA 4)).